We begin with the raw amino-acid sequence, 348 residues long: UDP-3-O-acylglucosamine N-acyltransferase (348 aa).

Histidine 243 serves as the catalytic Proton acceptor.

This sequence belongs to the transferase hexapeptide repeat family. LpxD subfamily. Homotrimer.

The catalysed reaction is a UDP-3-O-[(3R)-3-hydroxyacyl]-alpha-D-glucosamine + a (3R)-hydroxyacyl-[ACP] = a UDP-2-N,3-O-bis[(3R)-3-hydroxyacyl]-alpha-D-glucosamine + holo-[ACP] + H(+). It participates in bacterial outer membrane biogenesis; LPS lipid A biosynthesis. Catalyzes the N-acylation of UDP-3-O-acylglucosamine using 3-hydroxyacyl-ACP as the acyl donor. Is involved in the biosynthesis of lipid A, a phosphorylated glycolipid that anchors the lipopolysaccharide to the outer membrane of the cell. The protein is UDP-3-O-acylglucosamine N-acyltransferase of Hahella chejuensis (strain KCTC 2396).